A 257-amino-acid chain; its full sequence is Thiazole synthase (257 aa).

Catalysis depends on lysine 98, which acts as the Schiff-base intermediate with DXP. 1-deoxy-D-xylulose 5-phosphate-binding positions include glycine 159, alanine 185–glycine 186, and asparagine 207–threonine 208.

Belongs to the ThiG family. As to quaternary structure, homotetramer. Forms heterodimers with either ThiH or ThiS.

The protein localises to the cytoplasm. It carries out the reaction [ThiS sulfur-carrier protein]-C-terminal-Gly-aminoethanethioate + 2-iminoacetate + 1-deoxy-D-xylulose 5-phosphate = [ThiS sulfur-carrier protein]-C-terminal Gly-Gly + 2-[(2R,5Z)-2-carboxy-4-methylthiazol-5(2H)-ylidene]ethyl phosphate + 2 H2O + H(+). The protein operates within cofactor biosynthesis; thiamine diphosphate biosynthesis. Catalyzes the rearrangement of 1-deoxy-D-xylulose 5-phosphate (DXP) to produce the thiazole phosphate moiety of thiamine. Sulfur is provided by the thiocarboxylate moiety of the carrier protein ThiS. In vitro, sulfur can be provided by H(2)S. The polypeptide is Thiazole synthase (Anaeromyxobacter sp. (strain Fw109-5)).